The following is a 66-amino-acid chain: Beta-mammal toxin Cv5 (66 aa).

The 66-residue stretch at 1-66 (KEGYIVNYYD…VWPLPKKKCN (66 aa)) folds into the LCN-type CS-alpha/beta domain. 4 cysteine pairs are disulfide-bonded: cysteine 12-cysteine 65, cysteine 16-cysteine 41, cysteine 25-cysteine 46, and cysteine 29-cysteine 48.

In terms of tissue distribution, expressed by the venom gland.

Its subcellular location is the secreted. With respect to regulation, is susceptible to be neutralized by human antibodies scFvs 10FG2 and HV. Functionally, beta toxins bind voltage-independently at site-4 of sodium channels (Nav) and reduces peak current and shifts the voltage of activation toward more negative potentials thereby affecting sodium channel activation and promoting spontaneous and repetitive firing. This toxin is moderately toxic to mice. This is Beta-mammal toxin Cv5 from Centruroides villegasi (Scorpion).